We begin with the raw amino-acid sequence, 80 residues long: Large ribosomal subunit protein uL24 (80 aa).

The segment at 53-80 (HMRPTQGQTQGSIIEREFPIHSSNVKKS) is disordered.

It belongs to the universal ribosomal protein uL24 family. Part of the 50S ribosomal subunit.

In terms of biological role, one of two assembly initiator proteins, it binds directly to the 5'-end of the 23S rRNA, where it nucleates assembly of the 50S subunit. One of the proteins that surrounds the polypeptide exit tunnel on the outside of the subunit. This Pelodictyon phaeoclathratiforme (strain DSM 5477 / BU-1) protein is Large ribosomal subunit protein uL24.